The chain runs to 482 residues: tRNA sulfurtransferase (482 aa).

Residues 61–165 (AQYLETLACI…NDELYIISAV (105 aa)) form the THUMP domain. ATP-binding positions include 183–184 (LL), Lys265, Gly287, and Gln296. A disulfide bond links Cys344 and Cys456. The Rhodanese domain occupies 404–482 (LAADEVILDI…GFDNVKVYRP (79 aa)). The Cysteine persulfide intermediate role is filled by Cys456.

It belongs to the ThiI family.

It localises to the cytoplasm. It catalyses the reaction [ThiI sulfur-carrier protein]-S-sulfanyl-L-cysteine + a uridine in tRNA + 2 reduced [2Fe-2S]-[ferredoxin] + ATP + H(+) = [ThiI sulfur-carrier protein]-L-cysteine + a 4-thiouridine in tRNA + 2 oxidized [2Fe-2S]-[ferredoxin] + AMP + diphosphate. The catalysed reaction is [ThiS sulfur-carrier protein]-C-terminal Gly-Gly-AMP + S-sulfanyl-L-cysteinyl-[cysteine desulfurase] + AH2 = [ThiS sulfur-carrier protein]-C-terminal-Gly-aminoethanethioate + L-cysteinyl-[cysteine desulfurase] + A + AMP + 2 H(+). It participates in cofactor biosynthesis; thiamine diphosphate biosynthesis. Its function is as follows. Catalyzes the ATP-dependent transfer of a sulfur to tRNA to produce 4-thiouridine in position 8 of tRNAs, which functions as a near-UV photosensor. Also catalyzes the transfer of sulfur to the sulfur carrier protein ThiS, forming ThiS-thiocarboxylate. This is a step in the synthesis of thiazole, in the thiamine biosynthesis pathway. The sulfur is donated as persulfide by IscS. In Aeromonas salmonicida (strain A449), this protein is tRNA sulfurtransferase.